The sequence spans 473 residues: Hyaluronidase-2 (473 aa).

An N-terminal signal peptide occupies residues 1 to 20; it reads MRAGLGPIITLALVLEVAWA. Intrachain disulfides connect cysteine 47/cysteine 340 and cysteine 211/cysteine 227. 2 N-linked (GlcNAc...) asparagine glycosylation sites follow: asparagine 74 and asparagine 103. The active-site Proton donor is glutamate 135. An N-linked (GlcNAc...) asparagine glycan is attached at asparagine 357. The 79-residue stretch at 361–439 folds into the EGF-like domain; sequence ATQYCSWTQC…YLGWGGEQCQ (79 aa). Disulfide bonds link cysteine 365/cysteine 376, cysteine 370/cysteine 427, and cysteine 429/cysteine 438. Asparagine 390 carries N-linked (GlcNAc...) asparagine glycosylation. Asparagine 448 carries the GPI-anchor amidated asparagine; alternate lipid modification. Asparagine 448 is a glycosylation site (N-linked (GlcNAc...) asparagine; alternate). Residues 449–473 constitute a propeptide, removed in mature form; it reads ASRAWAGSHLTSLLGLVAVALTWTL.

Belongs to the glycosyl hydrolase 56 family. As to quaternary structure, interacts with MST1R. In terms of tissue distribution, widely expressed, with highest expression levels in kidney, lung and liver (at protein level).

The protein localises to the cell membrane. It catalyses the reaction Random hydrolysis of (1-&gt;4)-linkages between N-acetyl-beta-D-glucosamine and D-glucuronate residues in hyaluronate.. In terms of biological role, catalyzes hyaluronan degradation into small fragments that are endocytosed and degraded in lysosomes by HYAL1 and exoglycosidases. Essential for the breakdown of extracellular matrix hyaluronan. This Mus musculus (Mouse) protein is Hyaluronidase-2 (Hyal2).